A 349-amino-acid polypeptide reads, in one-letter code: uncharacterized protein (349 aa).

The segment covering 116–135 (HFSQTNPKSTPEPPCTSSSG) has biased composition (polar residues). Residues 116-148 (HFSQTNPKSTPEPPCTSSSGAGDCHENLPADGY) form a disordered region.

This is an uncharacterized protein from Caenorhabditis elegans.